Reading from the N-terminus, the 417-residue chain is Peptidyl-Asp metalloendopeptidase (417 aa).

Residues 1 to 23 (MKSKSMCTTVGLIAMCLAGSAAA) form the signal peptide. Histidine 331 contacts Zn(2+). Glutamate 332 is an active-site residue. Zn(2+) contacts are provided by histidine 335 and histidine 341.

This sequence belongs to the peptidase M72 family. It depends on Zn(2+) as a cofactor.

The enzyme catalyses Cleavage of Xaa-|-Asp, Xaa-|-Glu and Xaa-|-cysteic acid bonds.. Its function is as follows. Metalloprotease, specifically cleaves on the N-terminal side of aspartyl, glutamyl and cysteic acid residues. The polypeptide is Peptidyl-Asp metalloendopeptidase (Xanthomonas campestris pv. campestris (strain ATCC 33913 / DSM 3586 / NCPPB 528 / LMG 568 / P 25)).